A 279-amino-acid chain; its full sequence is Probable phosphatase phospho1 (279 aa).

D41 serves as the catalytic Nucleophile. Positions 41 and 43 each coordinate Mg(2+). The active-site Proton donor is D43. Residues D52 and D133 each contribute to the substrate site. Mg(2+) is bound at residue D215.

It belongs to the HAD-like hydrolase superfamily. PHOSPHO family. Mg(2+) is required as a cofactor.

Its subcellular location is the extracellular vesicle. The enzyme catalyses phosphoethanolamine + H2O = ethanolamine + phosphate. It carries out the reaction phosphocholine + H2O = choline + phosphate. Phosphatase that has a high activity toward phosphoethanolamine (PEA) and phosphocholine (PCho). Involved in the generation of inorganic phosphate for bone mineralization. The polypeptide is Probable phosphatase phospho1 (phospho1) (Danio rerio (Zebrafish)).